Reading from the N-terminus, the 446-residue chain is N-succinylarginine dihydrolase (446 aa).

Substrate contacts are provided by residues 19–28 (AGLSFGNVAS), asparagine 110, and 137–138 (HR). Glutamate 174 is an active-site residue. Position 213 (arginine 213) interacts with substrate. Residue histidine 249 is part of the active site. The substrate site is built by aspartate 251 and asparagine 364. The active-site Nucleophile is cysteine 370.

The protein belongs to the succinylarginine dihydrolase family. Homodimer.

It catalyses the reaction N(2)-succinyl-L-arginine + 2 H2O + 2 H(+) = N(2)-succinyl-L-ornithine + 2 NH4(+) + CO2. It participates in amino-acid degradation; L-arginine degradation via AST pathway; L-glutamate and succinate from L-arginine: step 2/5. Functionally, catalyzes the hydrolysis of N(2)-succinylarginine into N(2)-succinylornithine, ammonia and CO(2). The polypeptide is N-succinylarginine dihydrolase (Burkholderia pseudomallei (strain 668)).